A 238-amino-acid chain; its full sequence is RNA-binding protein pno1 (238 aa).

The KH domain occupies 162–211; sequence QSRAIGRLAGKGGRTKFTIENVTKTRIVLADSKIHILGSYQNIQLARRAI.

Belongs to the PNO1 family.

Its subcellular location is the nucleus. It localises to the nucleolus. This chain is RNA-binding protein pno1 (l(1)G0004), found in Drosophila pseudoobscura pseudoobscura (Fruit fly).